The primary structure comprises 1555 residues: Phospholipid-transporting ATPase DNF1 (1555 aa).

The interval 1–85 (MAPPQEEGGG…SSNNGGSAPR (85 aa)) is disordered. Residues 1–134 (MAPPQEEGGG…PKNLWFQFHN (134 aa)) are Cytoplasmic-facing. Basic residues predominate over residues 22-37 (WATRRLTVKSGARKRL). Over residues 72-82 (GSISSSNNGGS) the composition is skewed to low complexity. Residues 135-155 (IANIFFLFLVILVIFPIFGGV) form a helical membrane-spanning segment. Position 156 (N156) is a topological domain, extracellular. The helical transmembrane segment at 157–177 (PGLNSVPLIVIITVTAIKDAI) threads the bilayer. Residues 178–491 (EDYRRTILDI…ARIARELNFN (314 aa)) are Cytoplasmic-facing. The disordered stretch occupies residues 257-288 (TRTAPWDPSHRRSVASHTEEIQMTPVPSPVPH). Residues 492–512 (VICNFGILLIMCLIAAIANGI) form a helical membrane-spanning segment. Residues 513-537 (AWGKTDASLAWFEYGSIGGTPALTG) lie on the Extracellular side of the membrane. The chain crosses the membrane as a helical span at residues 538–558 (FITFWAAVIVFQNLVPISLYI). At 559–1123 (SLEIVRTLQA…TISNFFYKNM (565 aa)) the chain is on the cytoplasmic side. D606 (4-aspartylphosphate intermediate) is an active-site residue. ATP-binding residues include D606, K607, T608, E740, F781, S783, K786, K804, R839, T840, T919, G920, D921, R1031, and K1037. D606 is a binding site for Mg(2+). Mg(2+) is bound at residue T608. D1057 is a binding site for Mg(2+). The ATP site is built by N1060 and D1061. Mg(2+) is bound at residue D1061. Residues 1124 to 1144 (IWTWSIFWYQCYCNFDIAYIF) traverse the membrane as a helical segment. Residues 1145 to 1146 (EY) are Extracellular-facing. The chain crosses the membrane as a helical span at residues 1147-1167 (TYILMFNLFFTSVPVILMGVL). Residues 1168–1200 (DQDVSDTVSLAVPQLYRRGIERKEWTQTKFWLY) are Cytoplasmic-facing. Residues 1201–1221 (MIDGVYQSVMSFFIPFIFVVL) form a helical membrane-spanning segment. The Extracellular segment spans residues 1222–1237 (TPTAAGNGLDVSERTR). Residues 1238-1258 (LGAYIAHPAVITINGYILINT) form a helical membrane-spanning segment. Residues 1259–1262 (YRWD) lie on the Cytoplasmic side of the membrane. The chain crosses the membrane as a helical span at residues 1263-1283 (WLMLLSIVLSDVFIFFWTGVY). At 1284–1302 (TATTYSAGFYQAAPQVYQE) the chain is on the extracellular side. A helical membrane pass occupies residues 1303–1323 (LTFWMCLIVTPALCLLPRLVV). Residue R1320 participates in a 1,2-diacyl-sn-glycero-3-phospho-L-serine binding. Over 1324 to 1555 (KCIQKQRFPY…EGEPPREPPM (232 aa)) the chain is Cytoplasmic. Disordered regions lie at residues 1364 to 1456 (VEGE…ERTR) and 1489 to 1555 (ESTH…EPPM). A compositionally biased stretch (polar residues) spans 1406-1432 (ATHNTRAQNGSDGTTYIMQSRTSTELQ). Basic and acidic residues-rich tracts occupy residues 1436–1456 (PFDRDREEETPAVRPSIERTR) and 1540–1555 (KSIDTTEGEPPREPPM).

It belongs to the cation transport ATPase (P-type) (TC 3.A.3) family. Type IV subfamily. As to quaternary structure, component of a flippase complex consisting of DNF1 and CDC50. Interacts with CDC50; the interaction is direct. It depends on Mg(2+) as a cofactor.

It is found in the cell membrane. Its subcellular location is the endosome membrane. It localises to the golgi apparatus. The protein localises to the trans-Golgi network membrane. The catalysed reaction is ATP + H2O + phospholipidSide 1 = ADP + phosphate + phospholipidSide 2.. It catalyses the reaction a 1,2-diacyl-sn-glycero-3-phosphoethanolamine(out) + ATP + H2O = a 1,2-diacyl-sn-glycero-3-phosphoethanolamine(in) + ADP + phosphate + H(+). It carries out the reaction a 1,2-diacyl-sn-glycero-3-phosphocholine(out) + ATP + H2O = a 1,2-diacyl-sn-glycero-3-phosphocholine(in) + ADP + phosphate + H(+). The enzyme catalyses a beta-D-glucosyl-(1&lt;-&gt;1')-N-acylsphing-4-enine(out) + ATP + H2O = a beta-D-glucosyl-(1&lt;-&gt;1')-N-acylsphing-4-enine(in) + ADP + phosphate + H(+). The catalysed reaction is a 1,2-diacyl-sn-glycero-3-phospho-L-serine(out) + ATP + H2O = a 1,2-diacyl-sn-glycero-3-phospho-L-serine(in) + ADP + phosphate + H(+). Its function is as follows. Catalytic component of a P4-ATPase flippase complex which catalyzes the hydrolysis of ATP coupled to the transport of phosphatidylcholine and phosphatidylserine from the lumenal to the cytosolic leaflet of membranes and ensures the maintenance of asymmetric distribution of phospholipids. May also transport glucosylceramide and phosphatidylethanolamine. The protein is Phospholipid-transporting ATPase DNF1 of Chaetomium thermophilum (strain DSM 1495 / CBS 144.50 / IMI 039719) (Thermochaetoides thermophila).